The sequence spans 510 residues: ATP synthase subunit alpha (510 aa).

171-178 (GDRQTGKT) lines the ATP pocket.

Belongs to the ATPase alpha/beta chains family. As to quaternary structure, F-type ATPases have 2 components, CF(1) - the catalytic core - and CF(0) - the membrane proton channel. CF(1) has five subunits: alpha(3), beta(3), gamma(1), delta(1), epsilon(1). CF(0) has three main subunits: a(1), b(2) and c(9-12). The alpha and beta chains form an alternating ring which encloses part of the gamma chain. CF(1) is attached to CF(0) by a central stalk formed by the gamma and epsilon chains, while a peripheral stalk is formed by the delta and b chains.

It is found in the cell inner membrane. It carries out the reaction ATP + H2O + 4 H(+)(in) = ADP + phosphate + 5 H(+)(out). In terms of biological role, produces ATP from ADP in the presence of a proton gradient across the membrane. The alpha chain is a regulatory subunit. This chain is ATP synthase subunit alpha, found in Phenylobacterium zucineum (strain HLK1).